A 257-amino-acid polypeptide reads, in one-letter code: Golgi SNAP receptor complex member 1-2 (257 aa).

The Cytoplasmic segment spans residues 1–235; the sequence is MTESSLDLQE…GSIKRKRSRD (235 aa). Asparagine 51 is subject to Phosphoserine. Residues 113 to 147 are a coiled coil; the sequence is TQKLARHRDILHEYTQEFRRIKGNINSLREHAELL. A helical; Anchor for type IV membrane protein transmembrane segment spans residues 236-256; that stretch reads TLILSAVIAACTLFLIIYWLS. A topological domain (vesicular) is located at residue lysine 257.

The protein belongs to the GOSR1 family. As to quaternary structure, component of several multiprotein Golgi SNARE complexes.

The protein localises to the golgi apparatus membrane. It is found in the endoplasmic reticulum membrane. Its function is as follows. Involved in transport from the ER to the Golgi apparatus as well as in intra-Golgi transport. It belongs to a super-family of proteins called t-SNAREs or soluble NSF (N-ethylmaleimide-sensitive factor) attachment protein receptor. This is Golgi SNAP receptor complex member 1-2 (GOS12) from Arabidopsis thaliana (Mouse-ear cress).